The sequence spans 151 residues: 3-dehydroquinate dehydratase (151 aa).

Catalysis depends on tyrosine 24, which acts as the Proton acceptor. Substrate is bound by residues asparagine 76, histidine 82, and aspartate 89. Histidine 102 functions as the Proton donor in the catalytic mechanism. Substrate-binding positions include 103–104 (LS) and arginine 113.

It belongs to the type-II 3-dehydroquinase family. As to quaternary structure, homododecamer.

It carries out the reaction 3-dehydroquinate = 3-dehydroshikimate + H2O. It functions in the pathway metabolic intermediate biosynthesis; chorismate biosynthesis; chorismate from D-erythrose 4-phosphate and phosphoenolpyruvate: step 3/7. In terms of biological role, catalyzes a trans-dehydration via an enolate intermediate. This chain is 3-dehydroquinate dehydratase, found in Acinetobacter baumannii (strain ATCC 17978 / DSM 105126 / CIP 53.77 / LMG 1025 / NCDC KC755 / 5377).